Consider the following 581-residue polypeptide: Glutamyl-tRNA reductase (581 aa).

Residues 49 to 52 (TCNR), Ser-109, 114 to 116 (EGQ), and Gln-120 contribute to the substrate site. The active-site Nucleophile is the Cys-50. Position 192–197 (192–197 (GAGSMS)) interacts with NADP(+). Residues 292–416 (PAVEDTAVQE…AEAPRPQPVL (125 aa)) form an insert region.

The protein belongs to the glutamyl-tRNA reductase family. Homodimer.

It carries out the reaction (S)-4-amino-5-oxopentanoate + tRNA(Glu) + NADP(+) = L-glutamyl-tRNA(Glu) + NADPH + H(+). Its pathway is porphyrin-containing compound metabolism; protoporphyrin-IX biosynthesis; 5-aminolevulinate from L-glutamyl-tRNA(Glu): step 1/2. Catalyzes the NADPH-dependent reduction of glutamyl-tRNA(Glu) to glutamate 1-semialdehyde (GSA). The sequence is that of Glutamyl-tRNA reductase from Streptomyces coelicolor (strain ATCC BAA-471 / A3(2) / M145).